We begin with the raw amino-acid sequence, 421 residues long: Lipid II:glycine glycyltransferase (421 aa).

It belongs to the FemABX family. In terms of assembly, monomer.

It is found in the cytoplasm. The enzyme catalyses beta-D-GlcNAc-(1-&gt;4)-Mur2Ac(oyl-L-Ala-D-isoglutaminyl-L-Lys-D-Ala-D-Ala)-di-trans,octa-cis-undecaprenyl diphosphate + glycyl-tRNA(Gly) = beta-D-GlcNAc-(1-&gt;4)-Mur2Ac(oyl-L-Ala-D-isoglutaminyl-L-Lys-(N(6)-Gly)-D-Ala-D-Ala)-di-trans,octa-cis-undecaprenyl diphosphate + tRNA(Gly) + H(+). Its function is as follows. Catalyzes the incorporation of the first glycine of the pentaglycine interpeptide bridge, which is characteristic of the S.aureus peptidoglycan. This glycine is added to the epsilon-amino group of the L-lysine of the membrane-bound lipid II intermediate (GlcNAc-(beta-1,4)-N-acetylmuramic acid(-L-Ala-D-iGln-L-Lys-D-Ala-D-Ala)-pyrophosphoryl-undecaprenol), using glycyl-tRNA(Gly) as donor, in a ribosome-independent mechanism. Involved in methicillin resistance. In Staphylococcus aureus (strain Mu50 / ATCC 700699), this protein is Lipid II:glycine glycyltransferase (femX).